A 149-amino-acid chain; its full sequence is UPF0178 protein SERP0336 (149 aa).

This sequence belongs to the UPF0178 family.

This is UPF0178 protein SERP0336 from Staphylococcus epidermidis (strain ATCC 35984 / DSM 28319 / BCRC 17069 / CCUG 31568 / BM 3577 / RP62A).